The following is a 126-amino-acid chain: Protein ApaG (126 aa).

Residues 2-126 (DVSLPCIKIQ…FRLAVPHVLN (125 aa)) form the ApaG domain.

The sequence is that of Protein ApaG from Vibrio cholerae serotype O1 (strain ATCC 39541 / Classical Ogawa 395 / O395).